The following is a 305-amino-acid chain: Sulfate adenylyltransferase subunit 2 (305 aa).

It belongs to the PAPS reductase family. CysD subfamily. As to quaternary structure, heterodimer composed of CysD, the smaller subunit, and CysN.

The enzyme catalyses sulfate + ATP + H(+) = adenosine 5'-phosphosulfate + diphosphate. It participates in sulfur metabolism; hydrogen sulfide biosynthesis; sulfite from sulfate: step 1/3. With CysN forms the ATP sulfurylase (ATPS) that catalyzes the adenylation of sulfate producing adenosine 5'-phosphosulfate (APS) and diphosphate, the first enzymatic step in sulfur assimilation pathway. APS synthesis involves the formation of a high-energy phosphoric-sulfuric acid anhydride bond driven by GTP hydrolysis by CysN coupled to ATP hydrolysis by CysD. This Myxococcus xanthus (strain DK1622) protein is Sulfate adenylyltransferase subunit 2.